The following is a 502-amino-acid chain: UPF0371 protein CLB_0371 (502 aa).

Belongs to the UPF0371 family.

The chain is UPF0371 protein CLB_0371 from Clostridium botulinum (strain ATCC 19397 / Type A).